A 416-amino-acid chain; its full sequence is Serine hydroxymethyltransferase 1 (416 aa).

Residues leucine 121 and glycine 125 to leucine 127 contribute to the (6S)-5,6,7,8-tetrahydrofolate site. Lysine 229 is modified (N6-(pyridoxal phosphate)lysine). (6S)-5,6,7,8-tetrahydrofolate is bound by residues glutamate 245 and serine 354–phenylalanine 356.

This sequence belongs to the SHMT family. Homodimer. Pyridoxal 5'-phosphate serves as cofactor.

Its subcellular location is the cytoplasm. It catalyses the reaction (6R)-5,10-methylene-5,6,7,8-tetrahydrofolate + glycine + H2O = (6S)-5,6,7,8-tetrahydrofolate + L-serine. Its pathway is one-carbon metabolism; tetrahydrofolate interconversion. It participates in amino-acid biosynthesis; glycine biosynthesis; glycine from L-serine: step 1/1. Catalyzes the reversible interconversion of serine and glycine with tetrahydrofolate (THF) serving as the one-carbon carrier. This reaction serves as the major source of one-carbon groups required for the biosynthesis of purines, thymidylate, methionine, and other important biomolecules. Also exhibits THF-independent aldolase activity toward beta-hydroxyamino acids, producing glycine and aldehydes, via a retro-aldol mechanism. In Vibrio cholerae serotype O1 (strain ATCC 39315 / El Tor Inaba N16961), this protein is Serine hydroxymethyltransferase 1.